We begin with the raw amino-acid sequence, 211 residues long: SAGA-associated factor 11 homolog (211 aa).

The segment at 115-136 (CTCPHCDRLVAAARFAPHLEKC) adopts an SGF11-type zinc-finger fold. The segment at 153-211 (TKEGASASSSSTSTYIQSGGNTGGTDDEDDVDWSSDKRKKKSTQNSRNNGSKKNNGKIF) is disordered. The segment covering 157-166 (ASASSSSTST) has biased composition (low complexity). Position 187 is a phosphoserine (S187). Residues 197–211 (NSRNNGSKKNNGKIF) show a composition bias toward low complexity.

The protein belongs to the SGF11 family. Component of some SAGA transcription coactivator-HAT complexes, at least composed of Ada2b, not/nonstop, Pcaf/Gcn5, Sgf11 and Spt3. Within the SAGA complex, Sgf11, e(y)2, and not/nonstop form an additional subcomplex of SAGA called the DUB module (deubiquitination module). Interacts directly with not/nonstop. Interacts with the AMEX complex component xmas-2. Interacts with Cbp80; important for promoter recruitment of Sgf11 that is not associated with the DUB module.

Its subcellular location is the nucleus. The protein localises to the nucleoplasm. It localises to the cytoplasm. Component of the transcription regulatory histone acetylation (HAT) complex SAGA, a multiprotein complex that activates transcription by remodeling chromatin and mediating histone acetylation and deubiquitination. Within the SAGA complex, participates in a subcomplex that specifically deubiquitinates histone H2B. The SAGA complex is recruited to specific gene promoters by activators, where it is required for transcription. Required for nuclear receptor-mediated transactivation. Binds independently on SAGA to promoters in an RNA-dependent manner. Binds to mRNA and is essential for total mRNA export from the nucleus. Required to counteract heterochromatin silencing. Controls the development of neuronal connectivity in visual system by being required for accurate axon targeting in the optic lobe. Required for expression of ecdysone-induced genes such as br/broad. This chain is SAGA-associated factor 11 homolog, found in Drosophila mojavensis (Fruit fly).